Consider the following 193-residue polypeptide: Capsid protein (193 aa).

The N-terminus is blocked.

The protein resides in the virion. The polypeptide is Capsid protein (Crataegus (hawthorn)).